Consider the following 183-residue polypeptide: A-type ATP synthase subunit E (183 aa).

Belongs to the V-ATPase E subunit family. As to quaternary structure, has multiple subunits with at least A(3), B(3), C, D, E, F, H, I and proteolipid K(x).

It localises to the cell membrane. Component of the A-type ATP synthase that produces ATP from ADP in the presence of a proton gradient across the membrane. The protein is A-type ATP synthase subunit E of Methanosarcina barkeri (strain Fusaro / DSM 804).